Consider the following 170-residue polypeptide: Peptide deformylase (170 aa).

Cys91 and His133 together coordinate Fe cation. Residue Glu134 is part of the active site. His137 is a binding site for Fe cation.

Belongs to the polypeptide deformylase family. Requires Fe(2+) as cofactor.

It carries out the reaction N-terminal N-formyl-L-methionyl-[peptide] + H2O = N-terminal L-methionyl-[peptide] + formate. Removes the formyl group from the N-terminal Met of newly synthesized proteins. Requires at least a dipeptide for an efficient rate of reaction. N-terminal L-methionine is a prerequisite for activity but the enzyme has broad specificity at other positions. In Yersinia enterocolitica serotype O:8 / biotype 1B (strain NCTC 13174 / 8081), this protein is Peptide deformylase.